We begin with the raw amino-acid sequence, 443 residues long: Tol-Pal system protein TolB (443 aa).

The N-terminal stretch at 1-33 (MKIGIINTKIRTVFSAFACMIAASLVCTMPARA) is a signal peptide.

The protein belongs to the TolB family. In terms of assembly, the Tol-Pal system is composed of five core proteins: the inner membrane proteins TolA, TolQ and TolR, the periplasmic protein TolB and the outer membrane protein Pal. They form a network linking the inner and outer membranes and the peptidoglycan layer.

It is found in the periplasm. Its function is as follows. Part of the Tol-Pal system, which plays a role in outer membrane invagination during cell division and is important for maintaining outer membrane integrity. This Brucella anthropi (strain ATCC 49188 / DSM 6882 / CCUG 24695 / JCM 21032 / LMG 3331 / NBRC 15819 / NCTC 12168 / Alc 37) (Ochrobactrum anthropi) protein is Tol-Pal system protein TolB.